Consider the following 463-residue polypeptide: Nicotinate phosphoribosyltransferase pncB2 (463 aa).

A Phosphohistidine modification is found at His-202.

The protein belongs to the NAPRTase family. In terms of processing, transiently phosphorylated on a His residue during the reaction cycle. Phosphorylation strongly increases the affinity for substrates and increases the rate of nicotinate D-ribonucleotide production. Dephosphorylation regenerates the low-affinity form of the enzyme, leading to product release.

It catalyses the reaction nicotinate + 5-phospho-alpha-D-ribose 1-diphosphate + ATP + H2O = nicotinate beta-D-ribonucleotide + ADP + phosphate + diphosphate. Its pathway is cofactor biosynthesis; NAD(+) biosynthesis; nicotinate D-ribonucleotide from nicotinate: step 1/1. Functionally, involved in the Preiss-Handler pathway, which is a recycling route that permits the salvage of free nicotinamide (NM) and nicotinic acid (Na) involved in the NAD biosynthesis. Catalyzes the synthesis of beta-nicotinate D-ribonucleotide from nicotinate and 5-phospho-D-ribose 1-phosphate at the expense of ATP. It is not able to use nicotinamide. PncB2 appears to be responsible for the increased salvage synthesis of NAD during infection of host tissues. The protein is Nicotinate phosphoribosyltransferase pncB2 (pncB2) of Mycobacterium tuberculosis (strain CDC 1551 / Oshkosh).